A 188-amino-acid chain; its full sequence is Elongation factor P (188 aa).

Lys-34 is modified (N6-(3,6-diaminohexanoyl)-5-hydroxylysine).

Belongs to the elongation factor P family. Post-translationally, may be beta-lysylated on the epsilon-amino group of Lys-34 by the combined action of EpmA and EpmB, and then hydroxylated on the C5 position of the same residue by EpmC (if this protein is present). Lysylation is critical for the stimulatory effect of EF-P on peptide-bond formation. The lysylation moiety may extend toward the peptidyltransferase center and stabilize the terminal 3-CCA end of the tRNA. Hydroxylation of the C5 position on Lys-34 may allow additional potential stabilizing hydrogen-bond interactions with the P-tRNA.

It is found in the cytoplasm. The protein operates within protein biosynthesis; polypeptide chain elongation. Its function is as follows. Involved in peptide bond synthesis. Alleviates ribosome stalling that occurs when 3 or more consecutive Pro residues or the sequence PPG is present in a protein, possibly by augmenting the peptidyl transferase activity of the ribosome. Modification of Lys-34 is required for alleviation. This Vibrio atlanticus (strain LGP32) (Vibrio splendidus (strain Mel32)) protein is Elongation factor P.